Reading from the N-terminus, the 515-residue chain is G-protein coupled receptor 176 (515 aa).

Over 1–41 (MGHNSSWVSPNTSHPRNTSGAEAGANLSAFGELSEAQLYRQ) the chain is Extracellular. N-linked (GlcNAc...) asparagine glycans are attached at residues N4, N11, N17, and N26. The helical transmembrane segment at 42-64 (FTTTVQVVIFIGSLLGNFMVLWS) threads the bilayer. At 65–77 (TCRTTVFKSVTNR) the chain is on the cytoplasmic side. A helical transmembrane segment spans residues 78–98 (FIKNLACSGICASVVCVPFDI). Residues 99-108 (ILSSSPHCCW) lie on the Extracellular side of the membrane. Residues 109-129 (WIYTMLFCKVLKFLHKVFCSV) form a helical membrane-spanning segment. Over 130–157 (TVLSFPAIALDRYYSVLYPLERKISDAK) the chain is Cytoplasmic. The chain crosses the membrane as a helical span at residues 158–177 (SRELVMYIWAHAVVASVPVF). Topologically, residues 178 to 204 (AVTNVADIYAMSTCTEVWSNSLGHLVY) are extracellular. A helical membrane pass occupies residues 205–225 (VLIYNVTTVIVPVAVVFLFLI). The Cytoplasmic segment spans residues 226-264 (LIRRALSASQKKKVIIAALRTPQNTISIPYASQREAELH). A helical membrane pass occupies residues 265-285 (ATLLSMVTVFILCSVPYATLV). At 286-301 (VYQTVLNVPNTSVFLL) the chain is on the extracellular side. The chain crosses the membrane as a helical span at residues 302-322 (LTAIWLPKVSLLANPVLFLTV). Topologically, residues 323–515 (NKSVRKCLVG…KVSIFPKVDS (193 aa)) are cytoplasmic. Positions 407–435 (SCPEGEQEPPQLAPSVPPPGTVDSEPRVS) are disordered. Residues 417–426 (QLAPSVPPPG) show a composition bias toward pro residues.

This sequence belongs to the G-protein coupled receptor 1 family. Expressed mainly in the brain, with prominent expression in the SCN (at protein level).

The protein localises to the cell membrane. Functionally, orphan receptor involved in normal circadian rhythm behavior. Acts through the G-protein subclass G(z)-alpha and has an agonist-independent basal activity to repress cAMP production. This chain is G-protein coupled receptor 176 (Gpr176), found in Mus musculus (Mouse).